We begin with the raw amino-acid sequence, 96 residues long: Protein RnfH (96 aa).

Belongs to the UPF0125 (RnfH) family.

This is Protein RnfH from Escherichia coli O127:H6 (strain E2348/69 / EPEC).